Consider the following 1026-residue polypeptide: Multidrug resistance protein MdtC (1026 aa).

A run of 11 helical transmembrane segments spans residues 15–35 (ILIA…LPVA), 333–353 (EVEE…FLFL), 360–380 (LIPA…MYLC), 387–407 (LSLM…IVVL), 431–451 (VGFT…PLLL), 463–483 (FAVT…TLTP), 528–548 (LVGV…IAIP), 853–873 (LILI…LYES), 897–917 (LFNA…IGIV), 953–973 (PIMM…LSGG), and 984–1004 (ITIV…TPVV).

The protein belongs to the resistance-nodulation-cell division (RND) (TC 2.A.6) family. MdtC subfamily. In terms of assembly, part of a tripartite efflux system composed of MdtA, MdtB and MdtC. MdtC forms a heteromultimer with MdtB.

Its subcellular location is the cell inner membrane. In Salmonella paratyphi A (strain AKU_12601), this protein is Multidrug resistance protein MdtC.